The primary structure comprises 85 residues: UPF0434 protein HNE_3545 (85 aa).

Belongs to the UPF0434 family.

The protein is UPF0434 protein HNE_3545 of Hyphomonas neptunium (strain ATCC 15444).